Reading from the N-terminus, the 242-residue chain is Response regulator GtcR (242 aa).

Residues 4–117 (TILIADDEPE…EAVARIQAQL (114 aa)) form the Response regulatory domain. A 4-aspartylphosphate modification is found at Asp53. A DNA-binding region (ompR/PhoB-type) is located at residues 133-233 (TQSTTVGRLT…VRGLGYKFAS (101 aa)).

In terms of processing, phosphorylated by GtcS.

Functionally, member of the two-component regulatory system GtcS/GtcR which may act in the control of the transcription of the grs operon which encodes the multienzymes involved in the biosynthesis of the peptide antibiotic gramicidin S. The polypeptide is Response regulator GtcR (gtcR) (Aneurinibacillus migulanus (Bacillus migulanus)).